A 175-amino-acid polypeptide reads, in one-letter code: RNA pyrophosphohydrolase (175 aa).

A Nudix hydrolase domain is found at 6-149; sequence GYRPNVGIVI…KRDVYRRVMK (144 aa). The Nudix box motif lies at 38-59; the sequence is GGINPGETPEQAMYRELFEEVG.

Belongs to the Nudix hydrolase family. RppH subfamily. A divalent metal cation serves as cofactor.

Functionally, accelerates the degradation of transcripts by removing pyrophosphate from the 5'-end of triphosphorylated RNA, leading to a more labile monophosphorylated state that can stimulate subsequent ribonuclease cleavage. The polypeptide is RNA pyrophosphohydrolase (Yersinia pseudotuberculosis serotype O:1b (strain IP 31758)).